Consider the following 1380-residue polypeptide: DNA-directed RNA polymerase subunit beta (1380 aa).

It belongs to the RNA polymerase beta chain family. In terms of assembly, the RNAP catalytic core consists of 2 alpha, 1 beta, 1 beta' and 1 omega subunit. When a sigma factor is associated with the core the holoenzyme is formed, which can initiate transcription.

The catalysed reaction is RNA(n) + a ribonucleoside 5'-triphosphate = RNA(n+1) + diphosphate. Functionally, DNA-dependent RNA polymerase catalyzes the transcription of DNA into RNA using the four ribonucleoside triphosphates as substrates. In Ehrlichia chaffeensis (strain ATCC CRL-10679 / Arkansas), this protein is DNA-directed RNA polymerase subunit beta.